The chain runs to 671 residues: Pescadillo homolog (671 aa).

Positions 317–403 (KVRELFRGLT…LMLPVTGYRI (87 aa)) constitute a BRCT domain. Positions 548–584 (QALRKAQEKSRQTETSEARLQRKMSEVKRQEAATRKM) form a coiled coil. Disordered stretches follow at residues 552-578 (KAQE…KRQE) and 643-671 (RRQR…KWVQ).

It belongs to the pescadillo family.

The protein resides in the nucleus. It is found in the nucleolus. The protein localises to the nucleoplasm. Its function is as follows. Required for maturation of ribosomal RNAs and formation of the large ribosomal subunit. This Leishmania infantum protein is Pescadillo homolog.